A 353-amino-acid chain; its full sequence is Histidinol-phosphate aminotransferase 1 (353 aa).

Lys211 bears the N6-(pyridoxal phosphate)lysine mark.

It belongs to the class-II pyridoxal-phosphate-dependent aminotransferase family. Histidinol-phosphate aminotransferase subfamily. In terms of assembly, homodimer. Requires pyridoxal 5'-phosphate as cofactor.

The enzyme catalyses L-histidinol phosphate + 2-oxoglutarate = 3-(imidazol-4-yl)-2-oxopropyl phosphate + L-glutamate. The protein operates within amino-acid biosynthesis; L-histidine biosynthesis; L-histidine from 5-phospho-alpha-D-ribose 1-diphosphate: step 7/9. In Nostoc sp. (strain PCC 7120 / SAG 25.82 / UTEX 2576), this protein is Histidinol-phosphate aminotransferase 1 (hisC1).